Consider the following 429-residue polypeptide: Adenylosuccinate synthetase (429 aa).

GTP contacts are provided by residues 12–18 (GDEGKGK) and 40–42 (GHT). D13 functions as the Proton acceptor in the catalytic mechanism. Mg(2+)-binding residues include D13 and G40. Residues 13-16 (DEGK), 38-41 (NAGH), T129, R143, Q223, T238, and R302 each bind IMP. Catalysis depends on H41, which acts as the Proton donor. Position 298–304 (298–304 (TVTGRAR)) interacts with substrate. GTP is bound by residues R304, 330-332 (KLD), and 412-414 (STS).

The protein belongs to the adenylosuccinate synthetase family. As to quaternary structure, homodimer. Requires Mg(2+) as cofactor.

The protein resides in the cytoplasm. It catalyses the reaction IMP + L-aspartate + GTP = N(6)-(1,2-dicarboxyethyl)-AMP + GDP + phosphate + 2 H(+). The protein operates within purine metabolism; AMP biosynthesis via de novo pathway; AMP from IMP: step 1/2. Its function is as follows. Plays an important role in the de novo pathway of purine nucleotide biosynthesis. Catalyzes the first committed step in the biosynthesis of AMP from IMP. In Acidiphilium cryptum (strain JF-5), this protein is Adenylosuccinate synthetase.